Reading from the N-terminus, the 102-residue chain is RNA-binding protein Hfq (102 aa).

A Sm domain is found at 9–68 (DPFLNALRRERVPVSIYLVNGIKLQGQIESFDQFVILLKNTVSQMVYKHAISTVVPSRPV). The segment at 63-102 (VPSRPVSHHSNNTGGGSNNYHHGSSPAPSSQPQQDSADAE) is disordered. Residues 70-102 (HHSNNTGGGSNNYHHGSSPAPSSQPQQDSADAE) show a composition bias toward low complexity.

This sequence belongs to the Hfq family. As to quaternary structure, homohexamer.

Its function is as follows. RNA chaperone that binds small regulatory RNA (sRNAs) and mRNAs to facilitate mRNA translational regulation in response to envelope stress, environmental stress and changes in metabolite concentrations. Also binds with high specificity to tRNAs. The chain is RNA-binding protein Hfq from Erwinia tasmaniensis (strain DSM 17950 / CFBP 7177 / CIP 109463 / NCPPB 4357 / Et1/99).